Reading from the N-terminus, the 286-residue chain is Ribosomal RNA small subunit methyltransferase A (286 aa).

Asn-28, Leu-30, Gly-55, Glu-77, Asp-103, and Asn-123 together coordinate S-adenosyl-L-methionine.

The protein belongs to the class I-like SAM-binding methyltransferase superfamily. rRNA adenine N(6)-methyltransferase family. RsmA subfamily.

Its subcellular location is the cytoplasm. The catalysed reaction is adenosine(1518)/adenosine(1519) in 16S rRNA + 4 S-adenosyl-L-methionine = N(6)-dimethyladenosine(1518)/N(6)-dimethyladenosine(1519) in 16S rRNA + 4 S-adenosyl-L-homocysteine + 4 H(+). Functionally, specifically dimethylates two adjacent adenosines (A1518 and A1519) in the loop of a conserved hairpin near the 3'-end of 16S rRNA in the 30S particle. May play a critical role in biogenesis of 30S subunits. The sequence is that of Ribosomal RNA small subunit methyltransferase A from Bradyrhizobium sp. (strain BTAi1 / ATCC BAA-1182).